A 360-amino-acid chain; its full sequence is DNA replication and repair protein RecF (360 aa).

30–37 (GQNGSGKT) is an ATP binding site.

Belongs to the RecF family.

The protein localises to the cytoplasm. In terms of biological role, the RecF protein is involved in DNA metabolism; it is required for DNA replication and normal SOS inducibility. RecF binds preferentially to single-stranded, linear DNA. It also seems to bind ATP. This is DNA replication and repair protein RecF from Shewanella loihica (strain ATCC BAA-1088 / PV-4).